The primary structure comprises 941 residues: MPDHTTFAARHIGPDPQAVAAMLDVIGVGSLDELAAKAVPAGIRDRLSADGIAPGLDRLPPPASETEALAELRGLAEANTVAVSMIGQGYYDTLTPPVLLRNILENPAWYTAYTPYQPEISQGRLEALLNFQTMVADLTGLEIANASMLDEGTAAAEAMTLMHRASRGKSNRLAVDVDVFAQTAAIVATRARPLGIEIVTADLRDGLPDGDFFGVIAQLPGASGAITDWAALVAQAHERGALVALGADLLALTLITPPGEIGADVAFGTTQRFGVPMGFGGPHAGYLAVHANHARQLPGRLVGVSLDADGSPAYRLALQTREQHIRRDKATSNICTAQVLLAVMAAMYASYHGAEGLTAIARRVHGHAEAIAAALGTAVVHDRYFDTVLARVPGRAHEVIAAAKARGINLWRVDDDHVSVACDEATTDEHVAAVLEAFGVAPAEPVASEIATRTSEFLTHPAFTQYRTETAMMRYLRTLADKDIALDRSMIPLGSCTMKLNAAAEMEPITWPEFARQHPFAPASDTPGLRRLIGDLENWLVAITGYDAVSLQPNAGSQGEYAGLLAIHDYHASRGEPHRDICLIPSSAHGTNAASAALAGMRVVVVGCHDNGDVDLDDLRAKVTDHRDRLSTLMITYPSTHGVYEHDIAEICAAVHDAGGQVYVDGANLNALVGLARPGKFGGDVSHLNLHKTFCIPHGGGGPGVGPVAVRSHLAPFLPGHPHAPELPQGHPVSSAPYGSASILPISWAYIRMMGADGLRAASLTAITSANYIARRLDEYFPVLYTGENGMVAHECILDLRPITKATGVTVDDVAKRLADYGFHAPTMSFPVAGTLMVEPTESETLTEVDAFCDAMIAIRGEIDRVGAGEWPVEDNPLRGAPHTAECLVTTDWDHPYSREQAAYPLGKDFRPKVWPPVRRIDGAYGDRNLVCSCPPVEAFA.

The residue at position 692 (K692) is an N6-(pyridoxal phosphate)lysine.

This sequence belongs to the GcvP family. In terms of assembly, the glycine cleavage system is composed of four proteins: P, T, L and H. It depends on pyridoxal 5'-phosphate as a cofactor.

The catalysed reaction is N(6)-[(R)-lipoyl]-L-lysyl-[glycine-cleavage complex H protein] + glycine + H(+) = N(6)-[(R)-S(8)-aminomethyldihydrolipoyl]-L-lysyl-[glycine-cleavage complex H protein] + CO2. Its function is as follows. The glycine cleavage system catalyzes the degradation of glycine. The P protein binds the alpha-amino group of glycine through its pyridoxal phosphate cofactor; CO(2) is released and the remaining methylamine moiety is then transferred to the lipoamide cofactor of the H protein. The chain is Glycine dehydrogenase (decarboxylating) from Mycobacterium avium (strain 104).